The sequence spans 897 residues: Isoleucine--tRNA ligase (897 aa).

A 'HIGH' region motif is present at residues 59–69 (PYANGDIHVGH). Residue Glu-553 coordinates L-isoleucyl-5'-AMP. Positions 594 to 598 (KMSKS) match the 'KMSKS' region motif. ATP is bound at residue Lys-597. Zn(2+) is bound by residues Cys-866, Cys-869, Cys-883, and Cys-886.

Belongs to the class-I aminoacyl-tRNA synthetase family. IleS type 1 subfamily. As to quaternary structure, monomer. Zn(2+) is required as a cofactor.

Its subcellular location is the cytoplasm. The catalysed reaction is tRNA(Ile) + L-isoleucine + ATP = L-isoleucyl-tRNA(Ile) + AMP + diphosphate. Catalyzes the attachment of isoleucine to tRNA(Ile). As IleRS can inadvertently accommodate and process structurally similar amino acids such as valine, to avoid such errors it has two additional distinct tRNA(Ile)-dependent editing activities. One activity is designated as 'pretransfer' editing and involves the hydrolysis of activated Val-AMP. The other activity is designated 'posttransfer' editing and involves deacylation of mischarged Val-tRNA(Ile). This chain is Isoleucine--tRNA ligase, found in Mycoplasmopsis synoviae (strain 53) (Mycoplasma synoviae).